Here is a 477-residue protein sequence, read N- to C-terminus: Glycogen synthase (477 aa).

K15 provides a ligand contact to ADP-alpha-D-glucose.

Belongs to the glycosyltransferase 1 family. Bacterial/plant glycogen synthase subfamily.

It carries out the reaction [(1-&gt;4)-alpha-D-glucosyl](n) + ADP-alpha-D-glucose = [(1-&gt;4)-alpha-D-glucosyl](n+1) + ADP + H(+). Its pathway is glycan biosynthesis; glycogen biosynthesis. In terms of biological role, synthesizes alpha-1,4-glucan chains using ADP-glucose. The protein is Glycogen synthase of Mannheimia succiniciproducens (strain KCTC 0769BP / MBEL55E).